The sequence spans 634 residues: Chaperone protein HtpG (634 aa).

The interval 1–342 (MSVETQKETL…SNDLSLNVSR (342 aa)) is a; substrate-binding. The b stretch occupies residues 343-559 (EILQKDPVID…EQDLGLQMRQ (217 aa)). The interval 560–634 (ILEASGQKVP…LNKLLVELSA (75 aa)) is c.

It belongs to the heat shock protein 90 family. In terms of assembly, homodimer.

It is found in the cytoplasm. In terms of biological role, molecular chaperone. Has ATPase activity. This chain is Chaperone protein HtpG, found in Pseudomonas aeruginosa (strain ATCC 15692 / DSM 22644 / CIP 104116 / JCM 14847 / LMG 12228 / 1C / PRS 101 / PAO1).